A 580-amino-acid polypeptide reads, in one-letter code: Frizzled and smoothened-like protein K (580 aa).

The N-terminal stretch at 1 to 18 (MRVLFILFLFYFYTYTEA) is a signal peptide. At 19 to 236 (QQYYPIDPTG…QWDNIFDTSD (218 aa)) the chain is on the extracellular side. The 130-residue stretch at 25 to 154 (DPTGKCEQYI…SSDYNLTTYG (130 aa)) folds into the FZ domain. Residues Asn-52, Asn-97, Asn-149, Asn-170, and Asn-186 are each glycosylated (N-linked (GlcNAc...) asparagine). The helical transmembrane segment at 237–257 (AISLVSLLCSVYLFITYMVIN) threads the bilayer. Over 258–264 (PKRNKYD) the chain is Cytoplasmic. Residues 265 to 285 (YFFSFFVLSIILMSIAGTIGF) traverse the membrane as a helical segment. Residues 286-308 (SVGGTRKLLCPEINRRGVYTDPA) lie on the Extracellular side of the membrane. A helical membrane pass occupies residues 309–329 (VAAAGWIFQFAIINAILWFSI). The Cytoplasmic segment spans residues 330–349 (NSFELWFQIKFIKRKLHLIK). The chain crosses the membrane as a helical span at residues 350 to 370 (FYILAVLVISIALSVPLSAIG). Over 371–391 (EFNAGLGNFVVWIESGKYQNW) the chain is Extracellular. Residues 392-412 (FFWGPLGIVLTVGTTFIGLVI) traverse the membrane as a helical segment. Topologically, residues 413–434 (WEIYKIVSSTNKSDFFKLQLKP) are cytoplasmic. Residues 435–455 (LMNMLLIYLTFVYLFGYNFYI) form a helical membrane-spanning segment. The Extracellular segment spans residues 456-490 (HNSLNGFYGSSEEFKNCIISTDGKDCRIQGPPYSS). Residues 491 to 511 (ILMFVFCLRIYGVYCIALYGF) form a helical membrane-spanning segment. The Cytoplasmic segment spans residues 512–580 (SPKTRSIWSN…SMEPDEIILR (69 aa)). The short motif at 514–519 (KTRSIW) is the Lys-Thr-X-X-X-Trp motif, mediates interaction with the PDZ domain of Dvl family members element. The disordered stretch occupies residues 542–580 (TTKGGTSSTDIKMSTNNNSNMDSGGGKSSSMEPDEIILR). Residues 551 to 563 (DIKMSTNNNSNMD) show a composition bias toward polar residues.

This sequence belongs to the G-protein coupled receptor Fz/Smo family.

It localises to the membrane. The polypeptide is Frizzled and smoothened-like protein K (fslK) (Dictyostelium discoideum (Social amoeba)).